The primary structure comprises 457 residues: Siroheme synthase (457 aa).

The interval 1–204 (MDHLPIFCQL…NDQKAITETT (204 aa)) is precorrin-2 dehydrogenase /sirohydrochlorin ferrochelatase. NAD(+) is bound by residues 22–23 (DV) and 43–44 (LA). Residue S128 is modified to Phosphoserine. The tract at residues 216–457 (GEVVLVGAGP…RDKLNWFSNH (242 aa)) is uroporphyrinogen-III C-methyltransferase. Residue P225 coordinates S-adenosyl-L-methionine. Residue D248 is the Proton acceptor of the active site. The active-site Proton donor is K270. S-adenosyl-L-methionine is bound by residues 301–303 (GGD), I306, 331–332 (TA), M382, and G411.

This sequence in the N-terminal section; belongs to the precorrin-2 dehydrogenase / sirohydrochlorin ferrochelatase family. It in the C-terminal section; belongs to the precorrin methyltransferase family.

It catalyses the reaction uroporphyrinogen III + 2 S-adenosyl-L-methionine = precorrin-2 + 2 S-adenosyl-L-homocysteine + H(+). The catalysed reaction is precorrin-2 + NAD(+) = sirohydrochlorin + NADH + 2 H(+). It carries out the reaction siroheme + 2 H(+) = sirohydrochlorin + Fe(2+). It participates in cofactor biosynthesis; adenosylcobalamin biosynthesis; precorrin-2 from uroporphyrinogen III: step 1/1. It functions in the pathway cofactor biosynthesis; adenosylcobalamin biosynthesis; sirohydrochlorin from precorrin-2: step 1/1. The protein operates within porphyrin-containing compound metabolism; siroheme biosynthesis; precorrin-2 from uroporphyrinogen III: step 1/1. Its pathway is porphyrin-containing compound metabolism; siroheme biosynthesis; siroheme from sirohydrochlorin: step 1/1. It participates in porphyrin-containing compound metabolism; siroheme biosynthesis; sirohydrochlorin from precorrin-2: step 1/1. Its function is as follows. Multifunctional enzyme that catalyzes the SAM-dependent methylations of uroporphyrinogen III at position C-2 and C-7 to form precorrin-2 via precorrin-1. Then it catalyzes the NAD-dependent ring dehydrogenation of precorrin-2 to yield sirohydrochlorin. Finally, it catalyzes the ferrochelation of sirohydrochlorin to yield siroheme. This is Siroheme synthase from Escherichia coli O81 (strain ED1a).